Here is a 360-residue protein sequence, read N- to C-terminus: Ribosomal RNA large subunit methyltransferase M (360 aa).

S-adenosyl-L-methionine-binding positions include serine 190, 223–226 (CPGG), aspartate 242, aspartate 262, and aspartate 280. Lysine 309 serves as the catalytic Proton acceptor.

The protein belongs to the class I-like SAM-binding methyltransferase superfamily. RNA methyltransferase RlmE family. RlmM subfamily. In terms of assembly, monomer.

It localises to the cytoplasm. It catalyses the reaction cytidine(2498) in 23S rRNA + S-adenosyl-L-methionine = 2'-O-methylcytidine(2498) in 23S rRNA + S-adenosyl-L-homocysteine + H(+). In terms of biological role, catalyzes the 2'-O-methylation at nucleotide C2498 in 23S rRNA. This Haemophilus ducreyi (strain 35000HP / ATCC 700724) protein is Ribosomal RNA large subunit methyltransferase M.